The sequence spans 27 residues: Pregnancy-associated glycoprotein 59 (27 aa).

The protein belongs to the peptidase A1 family. Post-translationally, glycosylated. Placenta.

The protein is Pregnancy-associated glycoprotein 59 (PAG59) of Capra hircus (Goat).